The following is a 368-amino-acid chain: Carbamoyl phosphate synthase small chain (368 aa).

A CPSase region spans residues Met1 to Gly178. Positions 45, 230, and 232 each coordinate L-glutamine. The region spanning His182–Leu368 is the Glutamine amidotransferase type-1 domain. The active-site Nucleophile is Cys257. L-glutamine is bound by residues Phe258, Gln261, Asn299, Gly301, and Tyr302. Residues His342 and Glu344 contribute to the active site.

Belongs to the CarA family. In terms of assembly, composed of two chains; the small (or glutamine) chain promotes the hydrolysis of glutamine to ammonia, which is used by the large (or ammonia) chain to synthesize carbamoyl phosphate. Tetramer of heterodimers (alpha,beta)4.

The catalysed reaction is hydrogencarbonate + L-glutamine + 2 ATP + H2O = carbamoyl phosphate + L-glutamate + 2 ADP + phosphate + 2 H(+). The enzyme catalyses L-glutamine + H2O = L-glutamate + NH4(+). Its pathway is amino-acid biosynthesis; L-arginine biosynthesis; carbamoyl phosphate from bicarbonate: step 1/1. It participates in pyrimidine metabolism; UMP biosynthesis via de novo pathway; (S)-dihydroorotate from bicarbonate: step 1/3. In terms of biological role, small subunit of the glutamine-dependent carbamoyl phosphate synthetase (CPSase). CPSase catalyzes the formation of carbamoyl phosphate from the ammonia moiety of glutamine, carbonate, and phosphate donated by ATP, constituting the first step of 2 biosynthetic pathways, one leading to arginine and/or urea and the other to pyrimidine nucleotides. The small subunit (glutamine amidotransferase) binds and cleaves glutamine to supply the large subunit with the substrate ammonia. The chain is Carbamoyl phosphate synthase small chain from Methanosarcina mazei (strain ATCC BAA-159 / DSM 3647 / Goe1 / Go1 / JCM 11833 / OCM 88) (Methanosarcina frisia).